The sequence spans 95 residues: Protein TusB (95 aa).

It belongs to the DsrH/TusB family. In terms of assembly, heterohexamer, formed by a dimer of trimers. The hexameric TusBCD complex contains 2 copies each of TusB, TusC and TusD. The TusBCD complex interacts with TusE.

It is found in the cytoplasm. In terms of biological role, part of a sulfur-relay system required for 2-thiolation of 5-methylaminomethyl-2-thiouridine (mnm(5)s(2)U) at tRNA wobble positions. The polypeptide is Protein TusB (Salmonella agona (strain SL483)).